Consider the following 495-residue polypeptide: MAEEKALNDQMLARRQKLATIVSDLHLDPFGKRFERTAKAQELHNLYDASSLEELENAKHEVVIAGRMVAKRGAGKVIFADFRDVSGKIQVYARRDDLADNYPIIKRADLGDFLGIKGIMMKTEAGELTVLATELTHLSKALRPMPDKFHGISDVETRYRKRYLDLIANEDSFKKFQERSHIISAIRAYMDRNDFLEVETPILQTEAGGAAARPFITHHNALNIDMYMRIATELYLKRLVVGGMERVYEIGRIFRNEGMDPKHNPEFTTMESYAAYMDFTDVMDETEGIFKAAASVVSDDLKITYQGTEIDLGTKFARKHLVDLIKEQTGIDFWQEMSVEEAQKLADDNHVKYEKYWGVGHIINAFFEEFVEDTLVQPTFVYGHPVEVSPLAKKNTDDPRFTDRFELFIMGSEYANAFTELNDPIDQRARFEAQAAERENGNDEAEGIDEDFIEALEYGMPPTGGLGVGIDRLVMLLTDSDTIRDVVLFPTMRPE.

Glu-406 and Glu-413 together coordinate Mg(2+).

The protein belongs to the class-II aminoacyl-tRNA synthetase family. Homodimer. The cofactor is Mg(2+).

It is found in the cytoplasm. The catalysed reaction is tRNA(Lys) + L-lysine + ATP = L-lysyl-tRNA(Lys) + AMP + diphosphate. The sequence is that of Lysine--tRNA ligase from Leuconostoc mesenteroides subsp. mesenteroides (strain ATCC 8293 / DSM 20343 / BCRC 11652 / CCM 1803 / JCM 6124 / NCDO 523 / NBRC 100496 / NCIMB 8023 / NCTC 12954 / NRRL B-1118 / 37Y).